The sequence spans 336 residues: Phosphate acyltransferase (336 aa).

It belongs to the PlsX family. Homodimer. Probably interacts with PlsY.

Its subcellular location is the cytoplasm. It catalyses the reaction a fatty acyl-[ACP] + phosphate = an acyl phosphate + holo-[ACP]. The protein operates within lipid metabolism; phospholipid metabolism. Its function is as follows. Catalyzes the reversible formation of acyl-phosphate (acyl-PO(4)) from acyl-[acyl-carrier-protein] (acyl-ACP). This enzyme utilizes acyl-ACP as fatty acyl donor, but not acyl-CoA. The polypeptide is Phosphate acyltransferase (Pseudomonas aeruginosa (strain UCBPP-PA14)).